A 283-amino-acid polypeptide reads, in one-letter code: Acetyl-coenzyme A carboxylase carboxyl transferase subunit beta (283 aa).

Positions 23–283 (LWIKCPSCSE…DFLMAGKAAA (261 aa)) constitute a CoA carboxyltransferase N-terminal domain. Residues Cys-27, Cys-30, Cys-46, and Cys-49 each contribute to the Zn(2+) site. The C4-type zinc finger occupies 27–49 (CPSCSEMLFTKEYEDNLSVCPHC).

The protein belongs to the AccD/PCCB family. In terms of assembly, acetyl-CoA carboxylase is a heterohexamer composed of biotin carboxyl carrier protein (AccB), biotin carboxylase (AccC) and two subunits each of ACCase subunit alpha (AccA) and ACCase subunit beta (AccD). It depends on Zn(2+) as a cofactor.

The protein resides in the cytoplasm. The enzyme catalyses N(6)-carboxybiotinyl-L-lysyl-[protein] + acetyl-CoA = N(6)-biotinyl-L-lysyl-[protein] + malonyl-CoA. Its pathway is lipid metabolism; malonyl-CoA biosynthesis; malonyl-CoA from acetyl-CoA: step 1/1. In terms of biological role, component of the acetyl coenzyme A carboxylase (ACC) complex. Biotin carboxylase (BC) catalyzes the carboxylation of biotin on its carrier protein (BCCP) and then the CO(2) group is transferred by the transcarboxylase to acetyl-CoA to form malonyl-CoA. The polypeptide is Acetyl-coenzyme A carboxylase carboxyl transferase subunit beta (Novosphingobium aromaticivorans (strain ATCC 700278 / DSM 12444 / CCUG 56034 / CIP 105152 / NBRC 16084 / F199)).